A 340-amino-acid polypeptide reads, in one-letter code: Eukaryotic translation initiation factor 3 subunit I (340 aa).

6 WD repeats span residues 8 to 47, 50 to 89, 91 to 135, 150 to 189, 194 to 233, and 291 to 330; these read GHERSLNQIRFNHDGDLLFSVAKDKILCAWYSANGERLGT, GHQGALWTVDVSPGTVLLATGAADNTVRLWNAKSGECVKV, DFPT…GEGN, CEQSKATVAGWSFLGKYIIAGHEDGSVSQYDSKTGEQLQN, EFDYQINDLQFSADRTYFITASKDKSAKIISCRDLQVMKT, and GHFGPLNTIAVHPAGTGYASGGEDGYVRVHHFDKPYFDFM.

The protein belongs to the eIF-3 subunit I family. In terms of assembly, component of the eukaryotic translation initiation factor 3 (eIF-3) complex.

Its subcellular location is the cytoplasm. Component of the eukaryotic translation initiation factor 3 (eIF-3) complex, which is involved in protein synthesis of a specialized repertoire of mRNAs and, together with other initiation factors, stimulates binding of mRNA and methionyl-tRNAi to the 40S ribosome. The eIF-3 complex specifically targets and initiates translation of a subset of mRNAs involved in cell proliferation. The chain is Eukaryotic translation initiation factor 3 subunit I from Coccidioides immitis (strain RS) (Valley fever fungus).